Consider the following 244-residue polypeptide: Osmotin-like protein OSM34 (244 aa).

A signal peptide spans 1-22 (MANLLVSTFIFSALLLISTATA). Disulfide bonds link Cys31–Cys222, Cys72–Cys82, Cys87–Cys93, Cys138–Cys212, Cys143–Cys195, Cys151–Cys161, Cys165–Cys174, and Cys175–Cys182.

Belongs to the thaumatin family.

The chain is Osmotin-like protein OSM34 (OSM34) from Arabidopsis thaliana (Mouse-ear cress).